Reading from the N-terminus, the 80-residue chain is Cell division protein ZapB (80 aa).

A coiled-coil region spans residues 3-80 (FEVLEQLEAK…NLLGKMDDVE (78 aa)).

This sequence belongs to the ZapB family. As to quaternary structure, homodimer. The ends of the coiled-coil dimer bind to each other, forming polymers. Interacts with FtsZ.

The protein resides in the cytoplasm. In terms of biological role, non-essential, abundant cell division factor that is required for proper Z-ring formation. It is recruited early to the divisome by direct interaction with FtsZ, stimulating Z-ring assembly and thereby promoting cell division earlier in the cell cycle. Its recruitment to the Z-ring requires functional FtsA or ZipA. In Vibrio atlanticus (strain LGP32) (Vibrio splendidus (strain Mel32)), this protein is Cell division protein ZapB.